A 220-amino-acid polypeptide reads, in one-letter code: Small ribosomal subunit protein uS3 (220 aa).

In terms of domain architecture, KH type-2 spans 38–106 (IREFVKKSLN…EVFLNIVEVR (69 aa)).

This sequence belongs to the universal ribosomal protein uS3 family. As to quaternary structure, part of the 30S ribosomal subunit. Forms a tight complex with proteins S10 and S14.

In terms of biological role, binds the lower part of the 30S subunit head. Binds mRNA in the 70S ribosome, positioning it for translation. This chain is Small ribosomal subunit protein uS3, found in Myxococcus xanthus (strain DK1622).